The primary structure comprises 85 residues: MKVTLIAILTCAAVLALHTTAAEELEAESQLMEVGMPDTELAAVDEERLFECSVSCEIEKEGNKDCKKKKCKGGWECKFNMCVKV.

Positions 1 to 22 (MKVTLIAILTCAAVLALHTTAA) are cleaved as a signal peptide. A propeptide spanning residues 23–48 (EELEAESQLMEVGMPDTELAAVDEER) is cleaved from the precursor. Disulfide bonds link Cys52-Cys66, Cys56-Cys77, and Cys71-Cys82.

The protein belongs to the neurotoxin 12 (Hwtx-2) family. 02 (Hwtx-2) subfamily. Expressed by the venom gland.

The protein resides in the secreted. Postsynaptic neurotoxin. This Cyriopagopus hainanus (Chinese bird spider) protein is U4-theraphotoxin-Hhn1w.